Consider the following 314-residue polypeptide: 2,3-dihydroxyphenylpropionate/2,3-dihydroxicinnamic acid 1,2-dioxygenase (314 aa).

The active-site Proton donor is His-115. His-179 (proton acceptor) is an active-site residue.

This sequence belongs to the LigB/MhpB extradiol dioxygenase family. As to quaternary structure, homotetramer. Fe(2+) serves as cofactor.

The catalysed reaction is 3-(2,3-dihydroxyphenyl)propanoate + O2 = (2Z,4E)-2-hydroxy-6-oxonona-2,4-dienedioate + H(+). It carries out the reaction (2E)-3-(2,3-dihydroxyphenyl)prop-2-enoate + O2 = (2Z,4E,7E)-2-hydroxy-6-oxonona-2,4,7-trienedioate + H(+). Its pathway is aromatic compound metabolism; 3-phenylpropanoate degradation. Functionally, catalyzes the non-heme iron(II)-dependent oxidative cleavage of 2,3-dihydroxyphenylpropionic acid and 2,3-dihydroxicinnamic acid into 2-hydroxy-6-ketononadienedioate and 2-hydroxy-6-ketononatrienedioate, respectively. The sequence is that of 2,3-dihydroxyphenylpropionate/2,3-dihydroxicinnamic acid 1,2-dioxygenase from Cupriavidus pinatubonensis (strain JMP 134 / LMG 1197) (Cupriavidus necator (strain JMP 134)).